The chain runs to 255 residues: Pre-miRNA 5'-monophosphate methyltransferase (255 aa).

S-adenosyl-L-methionine-binding positions include arginine 32, asparagine 66, aspartate 96, 121 to 122, and methionine 150; that span reads DI. In terms of domain architecture, Bin3-type SAM spans 41–253; that stretch reads LHKLFRKPAE…SLLLFKIQRH (213 aa).

This sequence belongs to the methyltransferase superfamily.

The protein localises to the cytoplasm. The enzyme catalyses a 5'-end 5'-phospho-ribonucleoside-RNA + S-adenosyl-L-methionine = a 5'-end (5'-methylphospho)-ribonucleoside-RNA + S-adenosyl-L-homocysteine. It catalyses the reaction a 5'-end 5'-phospho-ribonucleoside-RNA + 2 S-adenosyl-L-methionine = a 5'-end (5'-bismethylphospho)-ribonucleoside-RNA + 2 S-adenosyl-L-homocysteine. Functionally, O-methyltransferase that specifically monomethylates 5'-monophosphate of cytoplasmic histidyl tRNA (tRNA(His)), acting as a capping enzyme by protecting tRNA(His) from cleavage by DICER1. Also able, with less efficiently, to methylate the 5' monophosphate of a subset of pre-miRNAs, acting as a negative regulator of miRNA processing. The 5' monophosphate of pre-miRNAs is recognized by DICER1 and is required for pre-miRNAs processing: methylation at this position reduces the processing of pre-miRNAs by DICER1. Was also reported to mediate dimethylation of pre-miR-145; however dimethylation cannot be reproduced by another group which observes a monomethylation of pre-miR-145. This is Pre-miRNA 5'-monophosphate methyltransferase (bcdin3d) from Xenopus laevis (African clawed frog).